The following is a 425-amino-acid chain: Dihydroorotase (425 aa).

Residues His-61 and His-63 each contribute to the Zn(2+) site. Substrate-binding positions include 63 to 65 and Asn-95; that span reads HLR. Zn(2+) is bound by residues Asp-153, His-180, and His-233. Residue Asn-279 participates in substrate binding. Asp-306 contacts Zn(2+). Asp-306 is an active-site residue. His-310 is a binding site for substrate.

This sequence belongs to the metallo-dependent hydrolases superfamily. DHOase family. Class I DHOase subfamily. It depends on Zn(2+) as a cofactor.

The catalysed reaction is (S)-dihydroorotate + H2O = N-carbamoyl-L-aspartate + H(+). It participates in pyrimidine metabolism; UMP biosynthesis via de novo pathway; (S)-dihydroorotate from bicarbonate: step 3/3. Functionally, catalyzes the reversible cyclization of carbamoyl aspartate to dihydroorotate. This chain is Dihydroorotase, found in Geotalea daltonii (strain DSM 22248 / JCM 15807 / FRC-32) (Geobacter daltonii).